Here is a 408-residue protein sequence, read N- to C-terminus: UDP-N-acetylglucosamine--dolichyl-phosphate N-acetylglucosaminephosphotransferase (408 aa).

The Lumenal portion of the chain corresponds to Met-1 to Pro-10. Residues Leu-11 to Ala-38 form a helical membrane-spanning segment. Residues Ala-39–Gln-58 are Cytoplasmic-facing. Residues Gln-44–Leu-46 and Glu-56 each bind UDP-N-acetyl-alpha-D-glucosamine. Residues Gly-59–Phe-78 form a helical membrane-spanning segment. At Leu-79–Pro-91 the chain is on the lumenal side. A helical transmembrane segment spans residues His-92–Leu-118. Topologically, residues Asn-119–Arg-121 are cytoplasmic. The helical transmembrane segment at Trp-122 to Asn-143 threads the bilayer. Lys-125 is a binding site for dolichyl phosphate. Residues Phe-144–Gly-166 are Lumenal-facing. Asn-146 carries N-linked (GlcNAc...) asparagine glycosylation. A helical membrane pass occupies residues Ile-167–Ile-186. A dolichyl phosphate-binding site is contributed by Val-178–Ile-186. Position 185 (Asn-185) interacts with Mg(2+). Residues Leu-187–Gly-192 are Cytoplasmic-facing. Asn-191 serves as a coordination point for UDP-N-acetyl-alpha-D-glucosamine. A helical membrane pass occupies residues Leu-193–Leu-213. Topologically, residues Glu-214 to Arg-218 are lumenal. The chain crosses the membrane as a helical span at residues Asp-219–Asn-242. Over Trp-243–Val-250 the chain is Cytoplasmic. The chain crosses the membrane as a helical span at residues Gly-251–Gly-269. A Mg(2+)-binding site is contributed by Asp-252. The Lumenal segment spans residues His-270 to Phe-271. Residues Ser-272–Leu-293 form a helical membrane-spanning segment. Topologically, residues Leu-294–His-375 are cytoplasmic. Residue Arg-301 to Arg-303 participates in UDP-N-acetyl-alpha-D-glucosamine binding. Residues Glu-376–Gln-400 form a helical membrane-spanning segment. Topologically, residues Leu-401 to Val-408 are lumenal.

Belongs to the glycosyltransferase 4 family. As to quaternary structure, homodimer. It depends on Mg(2+) as a cofactor.

It localises to the endoplasmic reticulum membrane. It catalyses the reaction a di-trans,poly-cis-dolichyl phosphate + UDP-N-acetyl-alpha-D-glucosamine = an N-acetyl-alpha-D-glucosaminyl-diphospho-di-trans,poly-cis-dolichol + UMP. The protein operates within protein modification; protein glycosylation. With respect to regulation, inhibited by natural nucleoside antibiotic tunicamycin, which acts as a structural analog and competitor of UDP-GlcNAc. In terms of biological role, UDP-N-acetylglucosamine--dolichyl-phosphate N-acetylglucosaminephosphotransferase that operates in the biosynthetic pathway of dolichol-linked oligosaccharides, the glycan precursors employed in protein asparagine (N)-glycosylation. The assembly of dolichol-linked oligosaccharides begins on the cytosolic side of the endoplasmic reticulum membrane and finishes in its lumen. The sequential addition of sugars to dolichol pyrophosphate produces dolichol-linked oligosaccharides containing fourteen sugars, including two GlcNAcs, nine mannoses and three glucoses. Once assembled, the oligosaccharide is transferred from the lipid to nascent proteins by oligosaccharyltransferases. Catalyzes the initial step of dolichol-linked oligosaccharide biosynthesis, transfering GlcNAc-1-P from cytosolic UDP-GlcNAc onto the carrier lipid dolichyl phosphate (P-dolichol), yielding GlcNAc-P-P-dolichol embedded in the cytoplasmic leaflet of the endoplasmic reticulum membrane. This chain is UDP-N-acetylglucosamine--dolichyl-phosphate N-acetylglucosaminephosphotransferase (DPAGT1), found in Cricetulus griseus (Chinese hamster).